The chain runs to 243 residues: Adenosine 5'-phosphosulfate reductase (243 aa).

C126, C127, C209, and C212 together coordinate [4Fe-4S] cluster. C235 functions as the Nucleophile; cysteine thiosulfonate intermediate in the catalytic mechanism.

The protein belongs to the PAPS reductase family. CysH subfamily. It depends on [4Fe-4S] cluster as a cofactor.

It localises to the cytoplasm. It catalyses the reaction [thioredoxin]-disulfide + sulfite + AMP + 2 H(+) = adenosine 5'-phosphosulfate + [thioredoxin]-dithiol. It participates in sulfur metabolism; hydrogen sulfide biosynthesis; sulfite from sulfate. In terms of biological role, catalyzes the formation of sulfite from adenosine 5'-phosphosulfate (APS) using thioredoxin as an electron donor. The polypeptide is Adenosine 5'-phosphosulfate reductase (Staphylococcus epidermidis (strain ATCC 12228 / FDA PCI 1200)).